Here is a 574-residue protein sequence, read N- to C-terminus: Glutamyl-tRNA(Gln) amidotransferase subunit B, mitochondrial (574 aa).

A mitochondrion-targeting transit peptide spans 1–12 (MIRQFVSHRGIP). The segment at 34-62 (PLGRKNWSTSDEAKSKRAAMRKGGAPPPE) is disordered.

This sequence belongs to the GatB/GatE family. GatB subfamily. Subunit of the heterotrimeric GatCAB amidotransferase (AdT) complex, composed of A, B and C subunits.

Its subcellular location is the mitochondrion. It carries out the reaction L-glutamyl-tRNA(Gln) + L-glutamine + ATP + H2O = L-glutaminyl-tRNA(Gln) + L-glutamate + ADP + phosphate + H(+). Functionally, allows the formation of correctly charged Gln-tRNA(Gln) through the transamidation of misacylated Glu-tRNA(Gln) in the mitochondria. The reaction takes place in the presence of glutamine and ATP through an activated gamma-phospho-Glu-tRNA(Gln). The protein is Glutamyl-tRNA(Gln) amidotransferase subunit B, mitochondrial of Ajellomyces capsulatus (strain H143) (Darling's disease fungus).